We begin with the raw amino-acid sequence, 419 residues long: UDP-N-acetylglucosamine 1-carboxyvinyltransferase (419 aa).

Residue 22-23 (KN) coordinates phosphoenolpyruvate. R91 is a binding site for UDP-N-acetyl-alpha-D-glucosamine. The active-site Proton donor is C115. C115 is modified (2-(S-cysteinyl)pyruvic acid O-phosphothioketal). UDP-N-acetyl-alpha-D-glucosamine-binding positions include 120–124 (RPVDL), 160–163 (KVSV), D305, and I327.

This sequence belongs to the EPSP synthase family. MurA subfamily.

Its subcellular location is the cytoplasm. It catalyses the reaction phosphoenolpyruvate + UDP-N-acetyl-alpha-D-glucosamine = UDP-N-acetyl-3-O-(1-carboxyvinyl)-alpha-D-glucosamine + phosphate. Its pathway is cell wall biogenesis; peptidoglycan biosynthesis. In terms of biological role, cell wall formation. Adds enolpyruvyl to UDP-N-acetylglucosamine. In Klebsiella pneumoniae subsp. pneumoniae (strain ATCC 700721 / MGH 78578), this protein is UDP-N-acetylglucosamine 1-carboxyvinyltransferase.